The primary structure comprises 482 residues: Complement C1r subcomponent-like protein (482 aa).

Positions 1–43 (MSGFRGLVPELENSLWSSPTTSCMSKMCWWLLWGILHTCPTQA) are cleaved as a signal peptide. Residues 44 to 166 (SVLLAQQSPQ…KGFLALYQAV (123 aa)) form the CUB domain. 2 disulfide bridges follow: cysteine 97–cysteine 115 and cysteine 190–cysteine 223. The region spanning 166–225 (VAVNQPNGDTEAVTTPGAPKIQNHCQDPYYKADQTGTLSCPSSWKWKDRQDGGEVPECVP) is the Sushi domain. Positions 240 to 479 (TFGSSRAKLG…YMDWIKRVIE (240 aa)) constitute a Peptidase S1 domain. Catalysis depends on charge relay system residues histidine 278 and aspartate 334. N-linked (GlcNAc...) asparagine glycosylation is present at asparagine 358. 2 disulfide bridges follow: cysteine 397-cysteine 416 and cysteine 427-cysteine 457. Serine 431 (charge relay system) is an active-site residue.

This sequence belongs to the peptidase S1 family. Expressed in liver (at protein level).

Its subcellular location is the secreted. Its function is as follows. Mediates the proteolytic cleavage of HP/haptoglobin in the endoplasmic reticulum. The protein is Complement C1r subcomponent-like protein (C1rl) of Mus musculus (Mouse).